A 201-amino-acid chain; its full sequence is Ribonuclease HII (201 aa).

The RNase H type-2 domain maps to 12–201; it reads DLVAGVDEVG…VRELLDVPVQ (190 aa). Residues D18, E19, and D110 each coordinate a divalent metal cation.

The protein belongs to the RNase HII family. Mn(2+) serves as cofactor. Mg(2+) is required as a cofactor.

The protein resides in the cytoplasm. It carries out the reaction Endonucleolytic cleavage to 5'-phosphomonoester.. Endonuclease that specifically degrades the RNA of RNA-DNA hybrids. This Pseudomonas aeruginosa (strain UCBPP-PA14) protein is Ribonuclease HII.